The sequence spans 354 residues: MAIDENKQKALAAALGQIEKQFGKGSIMRLGEDRSMDVETISTGSLSLDIALGAGGLPMGRIVEIYGPESSGKTTLTLQVIAAAQREGKTCAFIDAEHALDPIYAKKLGVDIDNLLCSQPDTGEQALEICDALTRSGAVDVIIVDSVAALTPKAEIEGEIGDSHMGLAARMMSQAMRKLAGNLKNANTLLIFINQIRMKIGVMFGNPETTTGGNALKFYASVRLDIRRIGAVKEGDVVVGSETRVKVVKNKIAAPFKQAEFQILYGEGININGELVDLGVKHKLIEKAGAWYSYNGDKIGQGKANASNYLKENPAVAAELDKKLREMLLNGGNGEQPVATAAFADEADETSEEF.

67-74 (GPESSGKT) provides a ligand contact to ATP.

The protein belongs to the RecA family.

It localises to the cytoplasm. In terms of biological role, can catalyze the hydrolysis of ATP in the presence of single-stranded DNA, the ATP-dependent uptake of single-stranded DNA by duplex DNA, and the ATP-dependent hybridization of homologous single-stranded DNAs. It interacts with LexA causing its activation and leading to its autocatalytic cleavage. The sequence is that of Protein RecA from Yersinia enterocolitica serotype O:8 / biotype 1B (strain NCTC 13174 / 8081).